Here is an 860-residue protein sequence, read N- to C-terminus: Leucine--tRNA ligase (860 aa).

The short motif at 42–52 (PYPSGRLHMGH) is the 'HIGH' region element. Positions 619-623 (KMSKS) match the 'KMSKS' region motif. An ATP-binding site is contributed by Lys622.

Belongs to the class-I aminoacyl-tRNA synthetase family.

The protein resides in the cytoplasm. The enzyme catalyses tRNA(Leu) + L-leucine + ATP = L-leucyl-tRNA(Leu) + AMP + diphosphate. The protein is Leucine--tRNA ligase of Escherichia coli O6:K15:H31 (strain 536 / UPEC).